Here is a 77-residue protein sequence, read N- to C-terminus: Antitoxin VapB2 (77 aa).

The SpoVT-AbrB domain maps to 4-46; it reads ASVFMTNRSQAVRLPAEVRFSEEIKKLSVRVSGSDRILSPLNQ.

The protein belongs to the VapB family. As to quaternary structure, probably forms a complex with cognate toxin VapC2.

Its function is as follows. Antitoxin component of a type II toxin-antitoxin (TA) system. Neutralizes the effect of cognate toxin VapC2 but not non-cognate toxin VapC2. In Haemophilus influenzae (strain 86-028NP), this protein is Antitoxin VapB2.